The primary structure comprises 397 residues: MKILVLNCGSSSVKYQLFDMEDESVLAKGLVERIGIDGSVLTHRPAGKEKLVRETEIPDHKVAIRLCLEALTDPHYGVIKDYSEIGAIGHRIVHGGTFPHSVLVDASTKKAISELEVLAPLHNGPALRGIEACEAILPGTPQVTAFDTAFHQGMPDYAYTYSLPYELCQKHLIRRYGAHGTSHQYVALRAAAIVGKPLEELKVITCHLGNGSSITAIKNAKSYDTSMGFTPLAGLTMGTRCGDIDPAIVPFLMEKEGYTPAEMDQVMNRRSGVLGVSGLSSDFRDIEAAMAEGNDRARLAWEVFVHSAKKYIGAYAALLNGLDILVFTAGLGENSIAAREAICRDMDYLGIKIDPEKNQVRGQEREITAAGARVRTFVIPTNEELMIARDTLALVQA.

N7 lines the Mg(2+) pocket. K14 contacts ATP. Substrate is bound at residue R91. D147 serves as the catalytic Proton donor/acceptor. ATP contacts are provided by residues 207–211, 282–284, and 330–334; these read HLGNG, DFR, and GLGEN. A Mg(2+)-binding site is contributed by E383.

Belongs to the acetokinase family. Homodimer. Mg(2+) is required as a cofactor. The cofactor is Mn(2+).

It localises to the cytoplasm. The catalysed reaction is acetate + ATP = acetyl phosphate + ADP. It participates in metabolic intermediate biosynthesis; acetyl-CoA biosynthesis; acetyl-CoA from acetate: step 1/2. Its function is as follows. Catalyzes the formation of acetyl phosphate from acetate and ATP. Can also catalyze the reverse reaction. This Moorella thermoacetica (strain ATCC 39073 / JCM 9320) protein is Acetate kinase.